The following is a 540-amino-acid chain: Glucose-6-phosphate isomerase (540 aa).

Residue Glu-350 is the Proton donor of the active site. Catalysis depends on residues His-381 and Lys-503.

Belongs to the GPI family.

Its subcellular location is the cytoplasm. It carries out the reaction alpha-D-glucose 6-phosphate = beta-D-fructose 6-phosphate. Its pathway is carbohydrate biosynthesis; gluconeogenesis. It functions in the pathway carbohydrate degradation; glycolysis; D-glyceraldehyde 3-phosphate and glycerone phosphate from D-glucose: step 2/4. In terms of biological role, catalyzes the reversible isomerization of glucose-6-phosphate to fructose-6-phosphate. The protein is Glucose-6-phosphate isomerase of Burkholderia cenocepacia (strain ATCC BAA-245 / DSM 16553 / LMG 16656 / NCTC 13227 / J2315 / CF5610) (Burkholderia cepacia (strain J2315)).